The chain runs to 147 residues: 3-dehydroquinate dehydratase (147 aa).

Tyrosine 24 acts as the Proton acceptor in catalysis. 3 residues coordinate substrate: asparagine 75, histidine 81, and aspartate 88. Histidine 101 functions as the Proton donor in the catalytic mechanism. Substrate is bound by residues 102-103 (IS) and arginine 112.

The protein belongs to the type-II 3-dehydroquinase family. As to quaternary structure, homododecamer.

It carries out the reaction 3-dehydroquinate = 3-dehydroshikimate + H2O. Its pathway is metabolic intermediate biosynthesis; chorismate biosynthesis; chorismate from D-erythrose 4-phosphate and phosphoenolpyruvate: step 3/7. Its function is as follows. Catalyzes a trans-dehydration via an enolate intermediate. This chain is 3-dehydroquinate dehydratase, found in Cereibacter sphaeroides (strain ATCC 17023 / DSM 158 / JCM 6121 / CCUG 31486 / LMG 2827 / NBRC 12203 / NCIMB 8253 / ATH 2.4.1.) (Rhodobacter sphaeroides).